A 623-amino-acid polypeptide reads, in one-letter code: Pyranose 2-oxidase (623 aa).

An N-terminal signal peptide occupies residues 1 to 28 (MSTSSSDPFFNFAKSSFRSAAAQKASAS). A propeptide spanning residues 29–38 (SLPPLPGPDK) is cleaved from the precursor. At His-167 the chain carries Tele-8alpha-FAD histidine. 2 residues coordinate substrate: Gln-448 and His-450. Catalysis depends on His-548, which acts as the Proton acceptor. Residue Asn-593 is part of the active site.

It belongs to the GMC oxidoreductase family. Homotetramer. The cofactor is FAD.

The protein localises to the periplasm. The catalysed reaction is D-glucose + O2 = 2-dehydro-D-glucose + H2O2. Catalyzes the oxidation of various aldopyranoses and disaccharides on carbon-2 to the corresponding 2-keto sugars concomitant with the reduction of O(2) to H(2)O(2). Plays an important role in lignin degradation of wood rot fungi by supplying the essential cosubstrate H(2)O(2) for the ligninolytic peroxidases, lignin peroxidase and manganese-dependent peroxidase. The chain is Pyranose 2-oxidase (p2ox) from Peniophora sp. (strain SG) (White-rot fungus).